We begin with the raw amino-acid sequence, 188 residues long: Calcium load-activated calcium channel (188 aa).

Topologically, residues 1–4 (MSTM) are lumenal. The helical transmembrane segment at 5 to 32 (FADTILIVFISICTALLAEGITWVLVYR) threads the bilayer. A coiled-coil region spans residues 32-89 (RTDKYKRLKAEVEKQSKKLEKKKETITESAGRQQKKKIERQEEKLKNNNRDLSMVRMK). At 33-86 (TDKYKRLKAEVEKQSKKLEKKKETITESAGRQQKKKIERQEEKLKNNNRDLSMV) the chain is on the cytoplasmic side. The helical transmembrane segment at 87–106 (RMKSMFAIGFCFTALMGMFN) threads the bilayer. At 107–120 (SIFDGRVVAKLPFV) the chain is on the lumenal side. The stretch at 121–130 (PLSYIQGLSH) is an intramembrane region. The Lumenal segment spans residues 131-140 (RNLLGEDYTD). Residues 141-162 (CSFIFLYILCTMSIRQNIQKML) form a helical membrane-spanning segment. Residues 163–188 (GLAPSRAATKQAGGFLGPPPQAAKFS) are Cytoplasmic-facing.

It belongs to the TMCO1 family. As to quaternary structure, homodimer and homotetramer. Component of the multi-pass translocon (MPT) complex.

The protein resides in the endoplasmic reticulum membrane. It localises to the golgi apparatus membrane. In terms of biological role, calcium-selective channel required to prevent calcium stores from overfilling, thereby playing a key role in calcium homeostasis. In response to endoplasmic reticulum (ER) overloading, assembles into a homotetramer, forming a functional calcium-selective channel, regulating the calcium content in endoplasmic reticulum store. Component of the multi-pass translocon (MPT) complex that mediates insertion of multi-pass membrane proteins into the lipid bilayer of membranes. The protein is Calcium load-activated calcium channel of Danio rerio (Zebrafish).